The following is a 623-amino-acid chain: Chaperone protein HtpG (623 aa).

Positions 1–336 are a; substrate-binding; it reads MVSKQQTMGF…ASDLPLNISR (336 aa). Positions 337–550 are b; sequence EILQDNKQVE…EQDMGLEMQR (214 aa). The c stretch occupies residues 551–623; that stretch reads ILQAAGQQIP…NRVNRLLVSS (73 aa).

This sequence belongs to the heat shock protein 90 family. Homodimer.

It localises to the cytoplasm. Functionally, molecular chaperone. Has ATPase activity. In Legionella pneumophila (strain Lens), this protein is Chaperone protein HtpG.